Consider the following 745-residue polypeptide: DNA ligase (745 aa).

The segment at 1-27 (MRNHGPGSERKDACVSAPDPTFSDDVP) is disordered. NAD(+) is bound by residues 57 to 61 (DAEYD), 106 to 107 (SL), and E135. The N6-AMP-lysine intermediate role is filled by K137. NAD(+) contacts are provided by R158 and E197. The disordered stretch occupies residues 216-235 (GKPPFANPRNAAAGSLRQKD). NAD(+) is bound by residues K313 and K337. Residues C431, C434, C450, and C456 each contribute to the Zn(2+) site. The BRCT domain occupies 649-738 (DGPRLLDGIT…PEAARAARLS (90 aa)).

It belongs to the NAD-dependent DNA ligase family. LigA subfamily. It depends on Mg(2+) as a cofactor. Mn(2+) is required as a cofactor.

The enzyme catalyses NAD(+) + (deoxyribonucleotide)n-3'-hydroxyl + 5'-phospho-(deoxyribonucleotide)m = (deoxyribonucleotide)n+m + AMP + beta-nicotinamide D-nucleotide.. Its function is as follows. DNA ligase that catalyzes the formation of phosphodiester linkages between 5'-phosphoryl and 3'-hydroxyl groups in double-stranded DNA using NAD as a coenzyme and as the energy source for the reaction. It is essential for DNA replication and repair of damaged DNA. The polypeptide is DNA ligase (Thermobifida fusca (strain YX)).